A 425-amino-acid chain; its full sequence is MQYSSKKNSYEDQNFQNRFFNSLNGQNKSSLNQNSSFSESSKQQVVSITYEEIGLFPRSFNRVFDRFFKQLFFDVENLVIQEYRFYRYLFLTTVKCLFILLFVPLGINFLSKNYLIRPVTEYYWNTHNHEIFLNSYQQKRAFTELKNFEEKIYFESLLLSENQIFFGLSEKNSTFPSSEKSQKSEHFSNQDEHTNDFYGKPKKFQTDSSLQQKNEEKVFLFENSKSLAFEPNLNQIHSSGFLIASADFSKNEVQNFQNLNLSNNTSQSKTDFASVFRTSVQKRLQVKILELAKHYNEESIEAITNFFADVLSFITLCYLLVRLEIQINITKSFLLEVFFGLDDSKKSLLILFITDLLVGYHSPNIWELFFQTLFDHYGLPESQTTIFLLVATLPVLLDVLFKYLIFRHLNRASPATVATYHAMIE.

The helical transmembrane segment at 89 to 109 (LFLTTVKCLFILLFVPLGINF) threads the bilayer. Residues 159 to 278 (LSENQIFFGL…KTDFASVFRT (120 aa)) are insert. Positions 173–192 (STFPSSEKSQKSEHFSNQDE) are disordered. Residues 180 to 192 (KSQKSEHFSNQDE) are compositionally biased toward basic and acidic residues. The next 3 helical transmembrane spans lie at 300–320 (IEAI…CYLL), 350–370 (ILFI…ELFF), and 386–406 (IFLL…YLIF).

This sequence belongs to the CemA family.

The protein localises to the plastid. The protein resides in the chloroplast inner membrane. It carries out the reaction K(+)(in) + H(+)(out) = K(+)(out) + H(+)(in). In terms of biological role, contributes to K(+)/H(+) antiport activity by supporting proton efflux to control proton extrusion and homeostasis in chloroplasts in a light-dependent manner to modulate photosynthesis. Prevents excessive induction of non-photochemical quenching (NPQ) under continuous-light conditions. Indirectly promotes efficient inorganic carbon uptake into chloroplasts. The protein is Potassium/proton antiporter CemA of Tetradesmus obliquus (Green alga).